Reading from the N-terminus, the 571-residue chain is Proline--tRNA ligase (571 aa).

Belongs to the class-II aminoacyl-tRNA synthetase family. ProS type 1 subfamily. Homodimer.

The protein localises to the cytoplasm. It carries out the reaction tRNA(Pro) + L-proline + ATP = L-prolyl-tRNA(Pro) + AMP + diphosphate. Its function is as follows. Catalyzes the attachment of proline to tRNA(Pro) in a two-step reaction: proline is first activated by ATP to form Pro-AMP and then transferred to the acceptor end of tRNA(Pro). As ProRS can inadvertently accommodate and process non-cognate amino acids such as alanine and cysteine, to avoid such errors it has two additional distinct editing activities against alanine. One activity is designated as 'pretransfer' editing and involves the tRNA(Pro)-independent hydrolysis of activated Ala-AMP. The other activity is designated 'posttransfer' editing and involves deacylation of mischarged Ala-tRNA(Pro). The misacylated Cys-tRNA(Pro) is not edited by ProRS. The polypeptide is Proline--tRNA ligase (Pseudomonas syringae pv. tomato (strain ATCC BAA-871 / DC3000)).